The following is a 271-amino-acid chain: 4-hydroxy-tetrahydrodipicolinate reductase (271 aa).

NAD(+)-binding positions include 10 to 15 (GAGGRM), E36, 100 to 102 (GTT), and 124 to 127 (SGNM). H157 acts as the Proton donor/acceptor in catalysis. H158 lines the (S)-2,3,4,5-tetrahydrodipicolinate pocket. K161 serves as the catalytic Proton donor. 167 to 168 (GT) provides a ligand contact to (S)-2,3,4,5-tetrahydrodipicolinate.

This sequence belongs to the DapB family.

It is found in the cytoplasm. It carries out the reaction (S)-2,3,4,5-tetrahydrodipicolinate + NAD(+) + H2O = (2S,4S)-4-hydroxy-2,3,4,5-tetrahydrodipicolinate + NADH + H(+). It catalyses the reaction (S)-2,3,4,5-tetrahydrodipicolinate + NADP(+) + H2O = (2S,4S)-4-hydroxy-2,3,4,5-tetrahydrodipicolinate + NADPH + H(+). It participates in amino-acid biosynthesis; L-lysine biosynthesis via DAP pathway; (S)-tetrahydrodipicolinate from L-aspartate: step 4/4. Its function is as follows. Catalyzes the conversion of 4-hydroxy-tetrahydrodipicolinate (HTPA) to tetrahydrodipicolinate. The sequence is that of 4-hydroxy-tetrahydrodipicolinate reductase from Rhodopseudomonas palustris (strain ATCC BAA-98 / CGA009).